Reading from the N-terminus, the 156-residue chain is Small ribosomal subunit protein bS16 (156 aa).

A compositionally biased stretch (low complexity) spans 124–135 (AAKAAEAETPAE). The interval 124-156 (AAKAAEAETPAEVQHDDEKVELADVEESAPESV) is disordered. A compositionally biased stretch (basic and acidic residues) spans 136–145 (VQHDDEKVEL). Over residues 146–156 (ADVEESAPESV) the composition is skewed to acidic residues.

The protein belongs to the bacterial ribosomal protein bS16 family.

The protein is Small ribosomal subunit protein bS16 of Bifidobacterium animalis subsp. lactis (strain AD011).